We begin with the raw amino-acid sequence, 718 residues long: Polyribonucleotide nucleotidyltransferase (718 aa).

2 residues coordinate Mg(2+): Asp493 and Asp499. The region spanning Pro560–Ile619 is the KH domain. The S1 motif domain maps to Gly629–Lys697. The segment at Ser695–Thr718 is disordered. The segment covering Ala699–Thr718 has biased composition (basic and acidic residues).

The protein belongs to the polyribonucleotide nucleotidyltransferase family. Mg(2+) is required as a cofactor.

It localises to the cytoplasm. The enzyme catalyses RNA(n+1) + phosphate = RNA(n) + a ribonucleoside 5'-diphosphate. Its function is as follows. Involved in mRNA degradation. Catalyzes the phosphorolysis of single-stranded polyribonucleotides processively in the 3'- to 5'-direction. This Natranaerobius thermophilus (strain ATCC BAA-1301 / DSM 18059 / JW/NM-WN-LF) protein is Polyribonucleotide nucleotidyltransferase.